Reading from the N-terminus, the 224-residue chain is MIFAPSFSLIKNILLVSFLISHSFAAKTLTSSSNDDTLARSAAADADMAFFMEFLNDFDTAFPQYTSYMMQNHLTLPQPVADYYYHMVDLASTADLQSDIAQSFPFTQFQTFITAFPWYTSLLNKASATTIYLPQHFITGETEATMTNSSYASQKNSVSNSVPFSTANAGQSMISMANEENSTTALISASNSSSTSRTSQSQNGAHAKSLYFPMALFGIFAVAL.

Positions 1–25 are cleaved as a signal peptide; it reads MIFAPSFSLIKNILLVSFLISHSFA. N-linked (GlcNAc...) asparagine glycosylation is found at Asn-148, Asn-181, and Asn-191. A lipid anchor (GPI-anchor amidated asparagine) is attached at Asn-203. Residues 204–224 constitute a propeptide, removed in mature form; the sequence is GAHAKSLYFPMALFGIFAVAL.

It belongs to the SRP1/TIP1 family. Post-translationally, the GPI-anchor is attached to the protein in the endoplasmic reticulum and serves to target the protein to the cell surface. There, the glucosamine-inositol phospholipid moiety is cleaved off and the GPI-modified mannoprotein is covalently attached via its lipidless GPI glycan remnant to the 1,6-beta-glucan of the outer cell wall layer.

It is found in the secreted. Its subcellular location is the cell wall. The protein resides in the membrane. MATalpha-specific protein that interferes with a-factor, the pheromone secreted by MATa cells. Contributes to mating efficiency. Acts to bind and sequester a-factor rather than to degrade it, and promotes the efficient mating of MATalpha cells by keeping the a-factor concentration at the plasma membrane within the narrow range needed for accurate pheromone gradient detection. The chain is A-factor barrier protein 1 from Saccharomyces cerevisiae (strain ATCC 204508 / S288c) (Baker's yeast).